A 141-amino-acid polypeptide reads, in one-letter code: Hemoglobin subunit alpha (141 aa).

One can recognise a Globin domain in the interval 1–141 (VLSPADKTNV…VSTVLTSKYR (141 aa)). The residue at position 3 (Ser3) is a Phosphoserine. Lys7 carries the N6-succinyllysine modification. Thr8 is modified (phosphothreonine). Lys11 is modified (N6-succinyllysine). Position 16 is an N6-acetyllysine; alternate (Lys16). At Lys16 the chain carries N6-succinyllysine; alternate. Tyr24 is modified (phosphotyrosine). Ser35 carries the phosphoserine modification. Lys40 is subject to N6-succinyllysine. The residue at position 49 (Ser49) is a Phosphoserine. O2 is bound at residue His58. His87 contacts heme b. The residue at position 102 (Ser102) is a Phosphoserine. Thr108 is modified (phosphothreonine). 2 positions are modified to phosphoserine: Ser124 and Ser131. A phosphothreonine mark is found at Thr134 and Thr137. Ser138 is modified (phosphoserine).

This sequence belongs to the globin family. Heterotetramer of two alpha chains and two beta chains. Red blood cells.

Functionally, involved in oxygen transport from the lung to the various peripheral tissues. Its function is as follows. Hemopressin acts as an antagonist peptide of the cannabinoid receptor CNR1. Hemopressin-binding efficiently blocks cannabinoid receptor CNR1 and subsequent signaling. The polypeptide is Hemoglobin subunit alpha (HBA) (Cebus capucinus (White-faced sapajou)).